The sequence spans 337 residues: Casein kinase I isoform alpha (337 aa).

Ala-2 carries the N-acetylalanine modification. Ser-4 is subject to Phosphoserine. Lys-8 bears the N6-acetyllysine mark. In terms of domain architecture, Protein kinase spans 17–285; it reads YKLVRKIGSG…YLRQLFRILF (269 aa). ATP-binding positions include 23–31 and Lys-46; that span reads IGSGSFGDI. Asp-136 serves as the catalytic Proton acceptor. The span at 309 to 325 shows a compositional bias: low complexity; that stretch reads AASSSGQGQQAQTPTGK. Residues 309–337 form a disordered region; it reads AASSSGQGQQAQTPTGKQTDKTKSNMKGF.

The protein belongs to the protein kinase superfamily. CK1 Ser/Thr protein kinase family. Casein kinase I subfamily. In terms of assembly, interacts with the Axin complex. Interacts with TUT1, leading to TUT1 phosphorylation. Interacts with FAM83A, FAM83B, FAM83C, FAM83D, FAM83E, FAM83F, FAM83G and FAM83H (via DUF1669). Interaction with FAM83H recruits CSNK1A1 to keratin filaments. Phosphorylated by MTOR in response to mitogenic stimulation, leading to its activation.

Its subcellular location is the cytoplasm. The protein localises to the cytoskeleton. It localises to the microtubule organizing center. It is found in the centrosome. The protein resides in the chromosome. Its subcellular location is the centromere. The protein localises to the kinetochore. It localises to the nucleus speckle. It is found in the cilium basal body. The protein resides in the spindle. The enzyme catalyses L-seryl-[protein] + ATP = O-phospho-L-seryl-[protein] + ADP + H(+). It catalyses the reaction L-threonyl-[protein] + ATP = O-phospho-L-threonyl-[protein] + ADP + H(+). Casein kinases are operationally defined by their preferential utilization of acidic proteins such as caseins as substrates. Can phosphorylate a large number of proteins. Participates in Wnt signaling. Phosphorylates CTNNB1 at 'Ser-45'. May phosphorylate PER1 and PER2. May play a role in segregating chromosomes during mitosis. May play a role in keratin cytoskeleton disassembly and thereby, it may regulate epithelial cell migration. Acts as a positive regulator of mTORC1 and mTORC2 signaling in response to nutrients by mediating phosphorylation of DEPTOR inhibitor. Acts as an inhibitor of NLRP3 inflammasome assembly by mediating phosphorylation of NLRP3. The sequence is that of Casein kinase I isoform alpha (Csnk1a1) from Mus musculus (Mouse).